A 614-amino-acid polypeptide reads, in one-letter code: Dihydroxy-acid dehydratase (614 aa).

Position 81 (aspartate 81) interacts with Mg(2+). Cysteine 122 is a [2Fe-2S] cluster binding site. Mg(2+)-binding residues include aspartate 123 and lysine 124. Lysine 124 is modified (N6-carboxylysine). A [2Fe-2S] cluster-binding site is contributed by cysteine 193. Glutamate 489 serves as a coordination point for Mg(2+). The Proton acceptor role is filled by serine 515.

This sequence belongs to the IlvD/Edd family. In terms of assembly, homodimer. [2Fe-2S] cluster is required as a cofactor. Mg(2+) serves as cofactor.

It catalyses the reaction (2R)-2,3-dihydroxy-3-methylbutanoate = 3-methyl-2-oxobutanoate + H2O. The enzyme catalyses (2R,3R)-2,3-dihydroxy-3-methylpentanoate = (S)-3-methyl-2-oxopentanoate + H2O. It functions in the pathway amino-acid biosynthesis; L-isoleucine biosynthesis; L-isoleucine from 2-oxobutanoate: step 3/4. Its pathway is amino-acid biosynthesis; L-valine biosynthesis; L-valine from pyruvate: step 3/4. Functionally, functions in the biosynthesis of branched-chain amino acids. Catalyzes the dehydration of (2R,3R)-2,3-dihydroxy-3-methylpentanoate (2,3-dihydroxy-3-methylvalerate) into 2-oxo-3-methylpentanoate (2-oxo-3-methylvalerate) and of (2R)-2,3-dihydroxy-3-methylbutanoate (2,3-dihydroxyisovalerate) into 2-oxo-3-methylbutanoate (2-oxoisovalerate), the penultimate precursor to L-isoleucine and L-valine, respectively. The protein is Dihydroxy-acid dehydratase of Cellvibrio japonicus (strain Ueda107) (Pseudomonas fluorescens subsp. cellulosa).